The following is a 579-amino-acid chain: Sulfite reductase [NADPH] hemoprotein beta-component (579 aa).

Cysteine 434, cysteine 440, cysteine 479, and cysteine 483 together coordinate [4Fe-4S] cluster. Cysteine 483 serves as a coordination point for siroheme.

This sequence belongs to the nitrite and sulfite reductase 4Fe-4S domain family. In terms of assembly, alpha(8)-beta(8). The alpha component is a flavoprotein, the beta component is a hemoprotein. Requires siroheme as cofactor. The cofactor is [4Fe-4S] cluster.

The enzyme catalyses hydrogen sulfide + 3 NADP(+) + 3 H2O = sulfite + 3 NADPH + 4 H(+). Its pathway is sulfur metabolism; hydrogen sulfide biosynthesis; hydrogen sulfide from sulfite (NADPH route): step 1/1. Its function is as follows. Component of the sulfite reductase complex that catalyzes the 6-electron reduction of sulfite to sulfide. This is one of several activities required for the biosynthesis of L-cysteine from sulfate. The sequence is that of Sulfite reductase [NADPH] hemoprotein beta-component from Salmonella choleraesuis (strain SC-B67).